A 570-amino-acid chain; its full sequence is MDKKAREYAQDALKFIQRSGSNFLACKNLKERLENNGFINLSEGETWNLNKNEGYVLCKENRNICGFFVGKNFNIDTGSILISIGHIDSCALKISPNNNVIKKKIHQINVECYGSGLWHTWFDRSLGLSGQVLYKKGNKLVEKLIQINKSVLFLPSLAIHLQNRTRYDFSVKINYENHIKPIISTTLFNQLNKCKRNNVHHDTILTTDTKFSHKENSQNKRDDQMCHSFNDKDVSNHNLDKNTIEHLTNQQNEEKNKHTKDNPNSKDIVEHINTDNSYPLLYLLSKELNCKEEDILDFELCLMDTQEPCFTGVYEEFIEGARFDNLLGSFCVFEGFIELVNSIKNHTSNENTNHTNNITNDINDNIHNNLYISIGYDHEEIGSLSEVGARSYCTKNFIDRIISSVFKKEIHEKNLSVQEIYGNLVNRSFILNVDMAHCSHPNYPETVQDNHQLFFHEGIAIKYNTNKNYVTSPLHASLIKRTFELYYNKYKQQIKYQNFMVKNDTPCGSTVGSMVAANLSMPGIDIGIPQLAMHSIREIAAVHDVFFLIKGVFAFYTYYNQVLSTCVHDK.

H86 contributes to the Zn(2+) binding site. H160 is a substrate binding site. D324 contacts Zn(2+). E379 contacts substrate. Zn(2+) contacts are provided by E380 and D434. Residues D434, H437, K462, and Y469 each contribute to the substrate site. Residue H534 coordinates Zn(2+).

The protein belongs to the peptidase M18 family. In terms of assembly, homododecamer composed of homodimers and homotrimers that assemble into a tetrahedron shape to create a central tunnel containing the active sites. Homooctamer. It depends on Zn(2+) as a cofactor.

Its subcellular location is the cytoplasm. The enzyme catalyses Release of an N-terminal aspartate or glutamate from a peptide, with a preference for aspartate.. Activated by Co(2+). Inhibited by high concentrations (&gt;1mM) of Zn(2+). Its function is as follows. Aminopeptidase which specifically catalyzes the removal of glutamic acid or aspartic acid residues from the N-terminus of peptides. May play a role in the final step of host hemoglobin catabolism, by cleaving hemoglobin-derived oligopeptides in the cytoplasm. The sequence is that of Aspartyl aminopeptidase from Plasmodium falciparum (isolate 3D7).